The primary structure comprises 57 residues: Small ribosomal subunit protein bS21 (57 aa).

A disordered region spans residues 35-57 (REFYEKPSVRRKKKSEAARKRKY). Residues 43–57 (VRRKKKSEAARKRKY) show a composition bias toward basic residues.

Belongs to the bacterial ribosomal protein bS21 family.

This Bacillus licheniformis (strain ATCC 14580 / DSM 13 / JCM 2505 / CCUG 7422 / NBRC 12200 / NCIMB 9375 / NCTC 10341 / NRRL NRS-1264 / Gibson 46) protein is Small ribosomal subunit protein bS21.